The chain runs to 662 residues: Glutathione hydrolase 7 (662 aa).

Residues 1 to 106 (MAAENEASQE…AAECSCRQDG (106 aa)) are Cytoplasmic-facing. Phosphoserine is present on residues S17, S72, S79, and S83. Residues 26 to 90 (SFPRLPEDEP…DGSPLRETRK (65 aa)) are disordered. Positions 72 to 83 (SSSSEMGSQDGS) are enriched in low complexity. Residues 107 to 127 (LTVIVTACLTFATGVTVALVM) form a helical; Signal-anchor for type II membrane protein membrane-spanning segment. Residues 128 to 662 (QIYFGDPQIF…SPDAAGATIL (535 aa)) are Extracellular-facing. 9 N-linked (GlcNAc...) asparagine glycosylation sites follow: N198, N267, N283, N330, N353, N394, N519, N523, and N586.

The protein belongs to the gamma-glutamyltransferase family. As to quaternary structure, heterodimer composed of the light and heavy chains. The active site is located in the light chain. In terms of processing, cleaved by autocatalysis into a large and a small subunit and the autocatalytic cleavage is essential to the functional activation of the enzyme.

Its subcellular location is the membrane. The catalysed reaction is an N-terminal (5-L-glutamyl)-[peptide] + an alpha-amino acid = 5-L-glutamyl amino acid + an N-terminal L-alpha-aminoacyl-[peptide]. It carries out the reaction glutathione + H2O = L-cysteinylglycine + L-glutamate. The enzyme catalyses an S-substituted glutathione + H2O = an S-substituted L-cysteinylglycine + L-glutamate. Its pathway is sulfur metabolism; glutathione metabolism. Its function is as follows. Hydrolyzes and transfers gamma-glutamyl moieties from glutathione and other gamma-glutamyl compounds to acceptors. This chain is Glutathione hydrolase 7, found in Mus musculus (Mouse).